Reading from the N-terminus, the 237-residue chain is Phosphoribosylaminoimidazole-succinocarboxamide synthase (237 aa).

The protein belongs to the SAICAR synthetase family.

The enzyme catalyses 5-amino-1-(5-phospho-D-ribosyl)imidazole-4-carboxylate + L-aspartate + ATP = (2S)-2-[5-amino-1-(5-phospho-beta-D-ribosyl)imidazole-4-carboxamido]succinate + ADP + phosphate + 2 H(+). The protein operates within purine metabolism; IMP biosynthesis via de novo pathway; 5-amino-1-(5-phospho-D-ribosyl)imidazole-4-carboxamide from 5-amino-1-(5-phospho-D-ribosyl)imidazole-4-carboxylate: step 1/2. The chain is Phosphoribosylaminoimidazole-succinocarboxamide synthase from Baumannia cicadellinicola subsp. Homalodisca coagulata.